The sequence spans 306 residues: uncharacterized protein (306 aa).

It to M.tuberculosis Rv1486c, M.bovis Mb1522c and M.leprae ML1804.

This is an uncharacterized protein from Mycobacterium avium.